The chain runs to 154 residues: Protein X (154 aa).

Positions 68-117 (PCALRFTSARRMETTVNAHQVLPKVLYKRTLGLSAMSTTDLEAYFKDCLF) are mitochondrial targeting sequence.

It belongs to the orthohepadnavirus protein X family. As to quaternary structure, may form homodimer. May interact with host CEBPA, CFLAR, CREB1, DDB1, E4F1, HBXIP, HSPD1/HSP60, NFKBIA, POLR2E and SMAD4. Interacts with host SMC5-SMC6 complex and induces its degradation. Interacts with host TRPC4AP; leading to prevent ubiquitination of TRPC4AP. Interacts with host PLSCR1; this interaction promotes ubiquitination and degradation of HBx and impairs HBx-mediated cell proliferation. Post-translationally, a fraction may be phosphorylated in insect cells and HepG2 cells, a human hepatoblastoma cell line. Phosphorylated in vitro by host protein kinase C or mitogen-activated protein kinase. N-acetylated in insect cells.

It localises to the host cytoplasm. The protein localises to the host nucleus. It is found in the host mitochondrion. In terms of biological role, multifunctional protein that plays a role in silencing host antiviral defenses and promoting viral transcription. Does not seem to be essential for HBV infection. May be directly involved in development of cirrhosis and liver cancer (hepatocellular carcinoma). Most of cytosolic activities involve modulation of cytosolic calcium. The effect on apoptosis is controversial depending on the cell types in which the studies have been conducted. May induce apoptosis by localizing in mitochondria and causing loss of mitochondrial membrane potential. May also modulate apoptosis by binding host CFLAR, a key regulator of the death-inducing signaling complex (DISC). Promotes viral transcription by using the host E3 ubiquitin ligase DDB1 to target the SMC5-SMC6 complex to proteasomal degradation. This host complex would otherwise bind to viral episomal DNA, and prevents its transcription. Moderately stimulates transcription of many different viral and cellular transcription elements. Promoters and enhancers stimulated by HBx contain DNA binding sites for NF-kappa-B, AP-1, AP-2, c-EBP, ATF/CREB, or the calcium-activated factor NF-AT. This Homo sapiens (Human) protein is Protein X.